The chain runs to 464 residues: tRNA modification GTPase MnmE (464 aa).

(6S)-5-formyl-5,6,7,8-tetrahydrofolate is bound by residues arginine 23, glutamate 84, and arginine 123. One can recognise a TrmE-type G domain in the interval 216-386 (GARATLVGRP…LGATVARLLL (171 aa)). Asparagine 226 is a K(+) binding site. GTP is bound by residues 226-231 (NAGKSS), 245-251 (TPIPGTT), and 270-273 (DTAG). Residue serine 230 participates in Mg(2+) binding. Residues threonine 245, isoleucine 247, and threonine 250 each coordinate K(+). Residue threonine 251 coordinates Mg(2+). Position 464 (lysine 464) interacts with (6S)-5-formyl-5,6,7,8-tetrahydrofolate.

This sequence belongs to the TRAFAC class TrmE-Era-EngA-EngB-Septin-like GTPase superfamily. TrmE GTPase family. As to quaternary structure, homodimer. Heterotetramer of two MnmE and two MnmG subunits. K(+) serves as cofactor.

It is found in the cytoplasm. Functionally, exhibits a very high intrinsic GTPase hydrolysis rate. Involved in the addition of a carboxymethylaminomethyl (cmnm) group at the wobble position (U34) of certain tRNAs, forming tRNA-cmnm(5)s(2)U34. This Roseiflexus castenholzii (strain DSM 13941 / HLO8) protein is tRNA modification GTPase MnmE.